Reading from the N-terminus, the 218-residue chain is Uracil-DNA glycosylase (218 aa).

The Proton acceptor role is filled by aspartate 59.

This sequence belongs to the uracil-DNA glycosylase (UDG) superfamily. UNG family.

It localises to the cytoplasm. The catalysed reaction is Hydrolyzes single-stranded DNA or mismatched double-stranded DNA and polynucleotides, releasing free uracil.. In terms of biological role, excises uracil residues from the DNA which can arise as a result of misincorporation of dUMP residues by DNA polymerase or due to deamination of cytosine. The protein is Uracil-DNA glycosylase of Staphylococcus saprophyticus subsp. saprophyticus (strain ATCC 15305 / DSM 20229 / NCIMB 8711 / NCTC 7292 / S-41).